We begin with the raw amino-acid sequence, 74 residues long: MALTKEQKQEIIKQNSRFAKDTGSSEVQIAILSAEIKQLSEHLKQHPHDFHSKRGLFMKNSKRRDLVKYLANQN.

This sequence belongs to the universal ribosomal protein uS15 family. In terms of assembly, part of the 30S ribosomal subunit. Forms a bridge to the 50S subunit in the 70S ribosome, contacting the 23S rRNA.

One of the primary rRNA binding proteins, it binds directly to 16S rRNA where it helps nucleate assembly of the platform of the 30S subunit by binding and bridging several RNA helices of the 16S rRNA. Functionally, forms an intersubunit bridge (bridge B4) with the 23S rRNA of the 50S subunit in the ribosome. This Onion yellows phytoplasma (strain OY-M) protein is Small ribosomal subunit protein uS15.